The sequence spans 177 residues: Photosystem I assembly protein Ycf4 (177 aa).

Helical transmembrane passes span 20–40 (VALL…SSYF) and 60–80 (LVMG…WAVI).

It belongs to the Ycf4 family.

The protein localises to the cellular thylakoid membrane. Functionally, seems to be required for the assembly of the photosystem I complex. The sequence is that of Photosystem I assembly protein Ycf4 from Synechococcus sp. (strain RCC307).